The chain runs to 158 residues: NADH-quinone oxidoreductase subunit B (158 aa).

4 residues coordinate [4Fe-4S] cluster: Cys-37, Cys-38, Cys-102, and Cys-132.

The protein belongs to the complex I 20 kDa subunit family. In terms of assembly, NDH-1 is composed of 14 different subunits. Subunits NuoB, C, D, E, F, and G constitute the peripheral sector of the complex. [4Fe-4S] cluster is required as a cofactor.

The protein resides in the cell inner membrane. The enzyme catalyses a quinone + NADH + 5 H(+)(in) = a quinol + NAD(+) + 4 H(+)(out). Functionally, NDH-1 shuttles electrons from NADH, via FMN and iron-sulfur (Fe-S) centers, to quinones in the respiratory chain. Couples the redox reaction to proton translocation (for every two electrons transferred, four hydrogen ions are translocated across the cytoplasmic membrane), and thus conserves the redox energy in a proton gradient. This Legionella pneumophila (strain Paris) protein is NADH-quinone oxidoreductase subunit B.